A 197-amino-acid polypeptide reads, in one-letter code: Peptide deformylase (197 aa).

Positions 106 and 148 each coordinate Fe cation. Glutamate 149 is a catalytic residue. Histidine 152 serves as a coordination point for Fe cation.

Belongs to the polypeptide deformylase family. Fe(2+) serves as cofactor.

The catalysed reaction is N-terminal N-formyl-L-methionyl-[peptide] + H2O = N-terminal L-methionyl-[peptide] + formate. Its function is as follows. Removes the formyl group from the N-terminal Met of newly synthesized proteins. Requires at least a dipeptide for an efficient rate of reaction. N-terminal L-methionine is a prerequisite for activity but the enzyme has broad specificity at other positions. The chain is Peptide deformylase from Mycolicibacterium vanbaalenii (strain DSM 7251 / JCM 13017 / BCRC 16820 / KCTC 9966 / NRRL B-24157 / PYR-1) (Mycobacterium vanbaalenii).